A 399-amino-acid chain; its full sequence is Argininosuccinate synthase (399 aa).

Ala-12–Ser-20 is a binding site for ATP. Tyr-90 contributes to the L-citrulline binding site. Gly-120 is an ATP binding site. 3 residues coordinate L-aspartate: Thr-122, Asn-126, and Asp-127. Residue Asn-126 participates in L-citrulline binding. The L-citrulline site is built by Arg-130, Ser-175, Glu-260, and Tyr-272.

Belongs to the argininosuccinate synthase family. Type 1 subfamily. Homotetramer.

Its subcellular location is the cytoplasm. It carries out the reaction L-citrulline + L-aspartate + ATP = 2-(N(omega)-L-arginino)succinate + AMP + diphosphate + H(+). It participates in amino-acid biosynthesis; L-arginine biosynthesis; L-arginine from L-ornithine and carbamoyl phosphate: step 2/3. The sequence is that of Argininosuccinate synthase from Methanothermobacter thermautotrophicus (strain ATCC 29096 / DSM 1053 / JCM 10044 / NBRC 100330 / Delta H) (Methanobacterium thermoautotrophicum).